A 254-amino-acid polypeptide reads, in one-letter code: Phosphonates import ATP-binding protein PhnC (254 aa).

The region spanning 2-246 is the ABC transporter domain; the sequence is IQLKNVSKIY…VFDDIYNGGN (245 aa). 35–42 contacts ATP; the sequence is GLSGAGKS.

It belongs to the ABC transporter superfamily. Phosphonates importer (TC 3.A.1.9.1) family. The complex is composed of two ATP-binding proteins (PhnC), two transmembrane proteins (PhnE) and a solute-binding protein (PhnD).

Its subcellular location is the cell membrane. The catalysed reaction is phosphonate(out) + ATP + H2O = phosphonate(in) + ADP + phosphate + H(+). In terms of biological role, part of the ABC transporter complex PhnCDE involved in phosphonates import. Responsible for energy coupling to the transport system. The chain is Phosphonates import ATP-binding protein PhnC from Lactobacillus johnsonii (strain CNCM I-12250 / La1 / NCC 533).